The primary structure comprises 337 residues: MSKINLLLLCGGGSAEHDISLMSANYFETSLAKSEQFSVLRVELDKFGQYRTAAGDDCELTNSREIRFRDESKTPWPVDYVIPCIHGYPGETGDIQSYFNLIQLPYFGCESEASSNCFNKITAKMWFSALGIPNTPYIFLNQFDDAAIEQTQAALAQWGSIFVKAASQGSSVGCYKVDDSAKVAGVLKDAFGYAPYVIVEKTIKARELEVAVYEYNGEVVATVPGEIICDTNTFYTFDEKYAKNSKARTDVVAQHVSAEISEQIRAYAIKAFKGMKLRHLSRIDFFLTADNEILLNEINTFPGSTPISMFPKMLQNHGHDFTEYLSLVINGQLTAKS.

The 207-residue stretch at 124-330 folds into the ATP-grasp domain; sequence KMWFSALGIP…FTEYLSLVIN (207 aa). ATP is bound at residue 154–209; the sequence is ALAQWGSIFVKAASQGSSVGCYKVDDSAKVAGVLKDAFGYAPYVIVEKTIKARELE. Asp284, Glu297, and Asn299 together coordinate Mg(2+).

The protein belongs to the D-alanine--D-alanine ligase family. Mg(2+) is required as a cofactor. It depends on Mn(2+) as a cofactor.

The protein resides in the cytoplasm. It catalyses the reaction 2 D-alanine + ATP = D-alanyl-D-alanine + ADP + phosphate + H(+). Its pathway is cell wall biogenesis; peptidoglycan biosynthesis. Its function is as follows. Cell wall formation. This Shewanella baltica (strain OS185) protein is D-alanine--D-alanine ligase.